A 303-amino-acid polypeptide reads, in one-letter code: HTH-type transcriptional regulator LinR (303 aa).

The 58-residue stretch at 6 to 63 (LDFRHLVLLDALLKRHSVSAAARELDLPQPTASHGLARLRKALGDPLLVRARDGMEPT) folds into the HTH lysR-type domain. A DNA-binding region (H-T-H motif) is located at residues 23 to 42 (VSAAARELDLPQPTASHGLA).

This sequence belongs to the LysR transcriptional regulatory family.

In terms of biological role, positively regulates the transcription of the linD and linE genes that are involved in gamma-hexachlorocyclohexane (gamma-HCH or lindane) degradation. This degradation pathway allows S.japonicum UT26 to grow on gamma-HCH as the sole source of carbon and energy. The protein is HTH-type transcriptional regulator LinR (linR) of Sphingobium indicum (strain DSM 16413 / CCM 7287 / MTCC 6362 / UT26 / NBRC 101211 / UT26S) (Sphingobium japonicum).